A 179-amino-acid chain; its full sequence is Large ribosomal subunit protein uL6 (179 aa).

Belongs to the universal ribosomal protein uL6 family. As to quaternary structure, part of the 50S ribosomal subunit.

This protein binds to the 23S rRNA, and is important in its secondary structure. It is located near the subunit interface in the base of the L7/L12 stalk, and near the tRNA binding site of the peptidyltransferase center. This chain is Large ribosomal subunit protein uL6, found in Bifidobacterium longum (strain DJO10A).